Here is a 397-residue protein sequence, read N- to C-terminus: Acetate kinase (397 aa).

Asn8 is a binding site for Mg(2+). An ATP-binding site is contributed by Lys15. Arg90 serves as a coordination point for substrate. Asp147 (proton donor/acceptor) is an active-site residue. Residues His207 to Gly211, Asp283 to Arg285, and Gly330 to Asn334 each bind ATP. Glu383 is a Mg(2+) binding site.

It belongs to the acetokinase family. Homodimer. Mg(2+) serves as cofactor. The cofactor is Mn(2+).

The protein resides in the cytoplasm. It carries out the reaction acetate + ATP = acetyl phosphate + ADP. It participates in metabolic intermediate biosynthesis; acetyl-CoA biosynthesis; acetyl-CoA from acetate: step 1/2. In terms of biological role, catalyzes the formation of acetyl phosphate from acetate and ATP. Can also catalyze the reverse reaction. The sequence is that of Acetate kinase from Fructilactobacillus sanfranciscensis (Lactobacillus sanfranciscensis).